A 273-amino-acid chain; its full sequence is Tyrosinase (273 aa).

6 residues coordinate Cu cation: His37, His53, His62, His189, His193, and His215.

It belongs to the tyrosinase family. The cofactor is Cu(2+).

It carries out the reaction 2 L-dopa + O2 = 2 L-dopaquinone + 2 H2O. It catalyses the reaction L-tyrosine + O2 = L-dopaquinone + H2O. In terms of biological role, this is a copper-containing oxidase that functions in the formation of pigments such as melanins and other polyphenolic compounds. The sequence is that of Tyrosinase (melC2) from Streptomyces lincolnensis.